The following is a 736-amino-acid chain: Gephyrin (736 aa).

The MPT Mo-transferase stretch occupies residues 14–166 (QIRVGVLTVS…FILPALPHAI (153 aa)). Residues 140–316 (LIINLPGSKK…VDITKVARRH (177 aa)) are interaction with GABARAP. 2 disordered regions span residues 181 to 232 (DELE…DSSS) and 260 to 290 (TASL…PKVQ). Positions 187-199 (PSPPPPLSPPPTT) are enriched in pro residues. A phosphoserine mark is found at Ser-188 and Ser-194. Thr-198 is modified (phosphothreonine). Ser-200 carries the post-translational modification Phosphoserine. Residue Cys-212 is the site of S-palmitoyl cysteine attachment. A compositionally biased stretch (polar residues) spans 261–290 (ASLSTTPSESPRAQATSRLSTASCPTPKVQ). Residue Ser-262 is modified to Phosphoserine. Phosphothreonine occurs at positions 265 and 266. Residues Ser-268 and Ser-270 each carry the phosphoserine modification. The S-palmitoyl cysteine moiety is linked to residue Cys-284. The residue at position 305 (Ser-305) is a Phosphoserine. Residues 326 to 736 (MDKAFITVLE…VVDVMVIGRL (411 aa)) are MPT adenylyltransferase.

The protein in the N-terminal section; belongs to the MoaB/Mog family. This sequence in the C-terminal section; belongs to the MoeA family. Homotrimer, homodimer and homooligomer. Interacts with GABARAP. Interacts with SRGAP2 (via SH3 domain). Interacts with GABRA3. Interacts with GLRB. GABRA3 and GLRB occupy overlapping binding sites. Interacts with ARHGAP32; IQSEC3, INSYN1 and INSYN2A. Mg(2+) is required as a cofactor. Post-translationally, palmitoylated. Palmitoylation is stimulated by GABA type A receptors activity. Palmitoylation by ZDHHC12 regulates clustering at synapses.

It is found in the postsynaptic cell membrane. The protein localises to the cell membrane. It localises to the cytoplasm. Its subcellular location is the cytosol. The protein resides in the cytoskeleton. It is found in the cell projection. The protein localises to the dendrite. It localises to the postsynaptic density. It catalyses the reaction molybdopterin + ATP + H(+) = adenylyl-molybdopterin + diphosphate. The enzyme catalyses adenylyl-molybdopterin + molybdate = Mo-molybdopterin + AMP + H(+). The protein operates within cofactor biosynthesis; molybdopterin biosynthesis. Inhibited by copper and tungsten. In terms of biological role, microtubule-associated protein involved in membrane protein-cytoskeleton interactions. It is thought to anchor the inhibitory glycine receptor (GLYR) to subsynaptic microtubules. Acts as a major instructive molecule at inhibitory synapses, where it also clusters GABA type A receptors. Also has a catalytic activity and catalyzes two steps in the biosynthesis of the molybdenum cofactor. In the first step, molybdopterin is adenylated. Subsequently, molybdate is inserted into adenylated molybdopterin and AMP is released. In Homo sapiens (Human), this protein is Gephyrin.